The chain runs to 202 residues: Dephospho-CoA kinase (202 aa).

Positions 6–202 (KVSITGDLSS…EYFYALKGAL (197 aa)) constitute a DPCK domain. 14 to 19 (SSGKTE) serves as a coordination point for ATP.

The protein belongs to the CoaE family.

Its subcellular location is the cytoplasm. It catalyses the reaction 3'-dephospho-CoA + ATP = ADP + CoA + H(+). Its pathway is cofactor biosynthesis; coenzyme A biosynthesis; CoA from (R)-pantothenate: step 5/5. In terms of biological role, catalyzes the phosphorylation of the 3'-hydroxyl group of dephosphocoenzyme A to form coenzyme A. The chain is Dephospho-CoA kinase from Chlamydia caviae (strain ATCC VR-813 / DSM 19441 / 03DC25 / GPIC) (Chlamydophila caviae).